Here is a 108-residue protein sequence, read N- to C-terminus: Probable endonuclease 4 (108 aa).

Residues His2, His36, Asp49, His51, and Glu81 each coordinate Zn(2+).

It belongs to the AP endonuclease 2 family. Requires Zn(2+) as cofactor.

It catalyses the reaction Endonucleolytic cleavage to 5'-phosphooligonucleotide end-products.. Endonuclease IV plays a role in DNA repair. It cleaves phosphodiester bonds at apurinic or apyrimidinic (AP) sites, generating a 3'-hydroxyl group and a 5'-terminal sugar phosphate. The polypeptide is Probable endonuclease 4 (nfo) (Thermotoga neapolitana).